The primary structure comprises 306 residues: MKHFLTLRDFSKEEILSLVNHASELKKEPKKLLQDKTLAMIFEKNSTRTRMAFELAITELGGKALFLSSNDLQLSRGEPVKDTARVIGAMVDFVMMRVNKHETLLEFARYSKAPVINALSELYHPTQVLGDLLTIKEWNKMQNGIAKVAFIGDSNNMCNSWLIAAAILGFEFSIAIPKNYKISPEIWEFAMKQALISGAKISLSHDKFEALKDKDVVITDTWVSMGEENEKERKIKEFEGFMIDEKAMSVANKDAILLHCLPAYRGYEVSEEIFEKHADVIFEEARNRLYVVKALLCFLDNQRGRE.

Carbamoyl phosphate is bound by residues 46-49 (STRT), glutamine 73, arginine 97, and 124-127 (HPTQ). Residues asparagine 156, aspartate 220, and 224 to 225 (SM) contribute to the L-ornithine site. Residues 260-261 (CL) and arginine 288 each bind carbamoyl phosphate.

Belongs to the aspartate/ornithine carbamoyltransferase superfamily. OTCase family.

It is found in the cytoplasm. It catalyses the reaction carbamoyl phosphate + L-ornithine = L-citrulline + phosphate + H(+). Its pathway is amino-acid biosynthesis; L-arginine biosynthesis; L-arginine from L-ornithine and carbamoyl phosphate: step 1/3. Its function is as follows. Reversibly catalyzes the transfer of the carbamoyl group from carbamoyl phosphate (CP) to the N(epsilon) atom of ornithine (ORN) to produce L-citrulline. In Campylobacter jejuni subsp. jejuni serotype O:23/36 (strain 81-176), this protein is Ornithine carbamoyltransferase.